We begin with the raw amino-acid sequence, 197 residues long: Ras-related protein Rab-7B (197 aa).

GTP-binding positions include 14-21 (GEKSVGKT), 33-38 (VTLKPT), 57-61 (DTSGQ), 119-122 (NKID), and 152-153 (AK). An Effector region motif is present at residues 31-39 (RFVTLKPTI). Residues Cys196 and Cys197 are each lipidated (S-geranylgeranyl cysteine).

Belongs to the small GTPase superfamily. Rab family.

In terms of biological role, protein transport. Probably involved in vesicular traffic. In Dictyostelium discoideum (Social amoeba), this protein is Ras-related protein Rab-7B (rab7B).